We begin with the raw amino-acid sequence, 359 residues long: Src kinase-associated phosphoprotein 2 (359 aa).

Serine 5, serine 6, and serine 9 each carry phosphoserine. The tract at residues 14-64 is homodimerization; it reads PEEIRNLLADVETFVADILKGENLSKKAKEKRESLIKKIKDVKSIYLQEFQ. The tract at residues 66–88 is disordered; sequence KGDAEDGEEYDDPFAGPPDTISL. Tyrosine 75 is modified (phosphotyrosine). 2 positions are modified to phosphoserine: serine 87 and serine 90. One can recognise a PH domain in the interval 116 to 219; that stretch reads FVLKAGYLEK…WVQQLKFVLQ (104 aa). Residues tyrosine 151 and tyrosine 197 each carry the phosphotyrosine modification. Serine 223 carries the post-translational modification Phosphoserine. At tyrosine 261 the chain carries Phosphotyrosine. Residues 264-293 form a disordered region; it reads LPEEEEDSAPVKVEEQRKMSQDSVHHTSGD. Residues 275–293 are compositionally biased toward basic and acidic residues; the sequence is KVEEQRKMSQDSVHHTSGD. 2 positions are modified to phosphoserine: serine 283 and serine 286. Residues 297–358 enclose the SH3 domain; it reads DYANFYQGLW…PKAYIMEMYD (62 aa).

This sequence belongs to the SKAP family. As to quaternary structure, homodimer. Interacts with PTPNS1. Part of a complex consisting of SKAP2, FYB1 and PTPNS1. Part of a complex consisting of SKAP2, FYB1 and LILRB3. May interact with actin. Interacts with FYB1, which is required for SKAP2 protein stability. Interacts with LAT, GRB2, PTK2B and PRAM1. May interact with FYN, HCK and LYN. Interacts with FASLG. Phosphorylated in resting platelets. Phosphorylated by FYN on Tyr-261 upon T-cell activation. Dephosphorylated on Tyr-75 by PTPN22. As to expression, ubiquitously expressed. Present in platelets (at protein level).

The protein localises to the cytoplasm. In terms of biological role, may be involved in B-cell and macrophage adhesion processes. In B-cells, may act by coupling the B-cell receptor (BCR) to integrin activation. May play a role in src signaling pathway. This Homo sapiens (Human) protein is Src kinase-associated phosphoprotein 2 (SKAP2).